The chain runs to 325 residues: UDP-N-acetylenolpyruvoylglucosamine reductase (325 aa).

The 182-residue stretch at 40–221 (RTGGLAELFY…RAAMDEVALH (182 aa)) folds into the FAD-binding PCMH-type domain. Arginine 186 is a catalytic residue. The Proton donor role is filled by serine 235. Glutamate 305 is an active-site residue.

Belongs to the MurB family. Requires FAD as cofactor.

It is found in the cytoplasm. The enzyme catalyses UDP-N-acetyl-alpha-D-muramate + NADP(+) = UDP-N-acetyl-3-O-(1-carboxyvinyl)-alpha-D-glucosamine + NADPH + H(+). It participates in cell wall biogenesis; peptidoglycan biosynthesis. Functionally, cell wall formation. The polypeptide is UDP-N-acetylenolpyruvoylglucosamine reductase (Bartonella henselae (strain ATCC 49882 / DSM 28221 / CCUG 30454 / Houston 1) (Rochalimaea henselae)).